A 214-amino-acid chain; its full sequence is Large ribosomal subunit protein uL3 (214 aa).

The segment at 131 to 153 (KSQRASHGNSRSHNVPGSIGMAQ) is disordered. Residues 132–145 (SQRASHGNSRSHNV) are compositionally biased toward polar residues. Gln153 carries the N5-methylglutamine modification.

Belongs to the universal ribosomal protein uL3 family. In terms of assembly, part of the 50S ribosomal subunit. Forms a cluster with proteins L14 and L19. Post-translationally, methylated by PrmB.

One of the primary rRNA binding proteins, it binds directly near the 3'-end of the 23S rRNA, where it nucleates assembly of the 50S subunit. The protein is Large ribosomal subunit protein uL3 of Thiobacillus denitrificans (strain ATCC 25259 / T1).